A 115-amino-acid polypeptide reads, in one-letter code: UPF0738 protein SAB0871 (115 aa).

It belongs to the UPF0738 family.

The chain is UPF0738 protein SAB0871 from Staphylococcus aureus (strain bovine RF122 / ET3-1).